Consider the following 285-residue polypeptide: Ribosomal RNA small subunit methyltransferase A (285 aa).

Residues Asn29, Leu31, Gly56, Glu77, Asp102, and Asn123 each contribute to the S-adenosyl-L-methionine site.

It belongs to the class I-like SAM-binding methyltransferase superfamily. rRNA adenine N(6)-methyltransferase family. RsmA subfamily.

It localises to the cytoplasm. It carries out the reaction adenosine(1518)/adenosine(1519) in 16S rRNA + 4 S-adenosyl-L-methionine = N(6)-dimethyladenosine(1518)/N(6)-dimethyladenosine(1519) in 16S rRNA + 4 S-adenosyl-L-homocysteine + 4 H(+). In terms of biological role, specifically dimethylates two adjacent adenosines (A1518 and A1519) in the loop of a conserved hairpin near the 3'-end of 16S rRNA in the 30S particle. May play a critical role in biogenesis of 30S subunits. The protein is Ribosomal RNA small subunit methyltransferase A of Clostridium perfringens (strain ATCC 13124 / DSM 756 / JCM 1290 / NCIMB 6125 / NCTC 8237 / Type A).